A 143-amino-acid chain; its full sequence is Nucleoside diphosphate kinase (143 aa).

The ATP site is built by lysine 11, phenylalanine 59, arginine 87, threonine 93, arginine 104, and asparagine 114. Catalysis depends on histidine 117, which acts as the Pros-phosphohistidine intermediate.

This sequence belongs to the NDK family. Homotetramer. The cofactor is Mg(2+).

Its subcellular location is the cytoplasm. It catalyses the reaction a 2'-deoxyribonucleoside 5'-diphosphate + ATP = a 2'-deoxyribonucleoside 5'-triphosphate + ADP. The catalysed reaction is a ribonucleoside 5'-diphosphate + ATP = a ribonucleoside 5'-triphosphate + ADP. Functionally, major role in the synthesis of nucleoside triphosphates other than ATP. The ATP gamma phosphate is transferred to the NDP beta phosphate via a ping-pong mechanism, using a phosphorylated active-site intermediate. This Pseudomonas aeruginosa (strain UCBPP-PA14) protein is Nucleoside diphosphate kinase.